Consider the following 372-residue polypeptide: 7-methylxanthosine synthase 1 (372 aa).

Tyrosine 18 is an S-adenosyl-L-homocysteine binding site. Xanthosine is bound by residues asparagine 21 and asparagine 25. The S-adenosyl-L-homocysteine site is built by cysteine 62, asparagine 67, aspartate 101, leucine 102, serine 140, phenylalanine 141, and cysteine 157. Position 158 (tyrosine 158) interacts with xanthosine. Residue cysteine 159 coordinates S-adenosyl-L-homocysteine. 2 residues coordinate xanthosine: glutamine 161 and tryptophan 162. Mg(2+) contacts are provided by asparagine 179, aspartate 261, phenylalanine 263, and asparagine 264. Serine 316, tyrosine 321, and tyrosine 356 together coordinate xanthosine.

It belongs to the methyltransferase superfamily. Type-7 methyltransferase family. Requires Mg(2+) as cofactor. Expressed in stems, young leaves, floral buds, developing endosperm and immature fruits (grains). Detected in roots and old leaves, but not in mature fruits.

The enzyme catalyses xanthosine + S-adenosyl-L-methionine = 7-methylxanthosine + S-adenosyl-L-homocysteine. It functions in the pathway alkaloid biosynthesis. Functionally, involved in the biosynthesis of caffeine. Specific for xanthosine and could not use xanthosine 5'-monophosphate (XMP) as substrate. Catalyzes the 7-N-methylation activity of xanthosine, but does not have 1-N- or 3-N-methylation activity. This is 7-methylxanthosine synthase 1 from Coffea arabica (Arabian coffee).